Reading from the N-terminus, the 191-residue chain is tRNA-specific adenosine deaminase 2 (191 aa).

A CMP/dCMP-type deaminase domain is found at 20 to 145 (EETEKWMEQA…SVLDIASADL (126 aa)). H71 contacts Zn(2+). The Proton donor role is filled by E73. Positions 107 and 110 each coordinate Zn(2+).

It belongs to the cytidine and deoxycytidylate deaminase family. ADAT2 subfamily. The cofactor is Zn(2+).

The catalysed reaction is adenosine(34) in tRNA + H2O + H(+) = inosine(34) in tRNA + NH4(+). Functionally, probably participates in deamination of adenosine-34 to inosine in many tRNAs. The protein is tRNA-specific adenosine deaminase 2 (DEADC1) of Bos taurus (Bovine).